The chain runs to 432 residues: Glutamate-1-semialdehyde 2,1-aminomutase (432 aa).

K269 carries the N6-(pyridoxal phosphate)lysine modification.

The protein belongs to the class-III pyridoxal-phosphate-dependent aminotransferase family. HemL subfamily. Homodimer. It depends on pyridoxal 5'-phosphate as a cofactor.

It localises to the cytoplasm. It catalyses the reaction (S)-4-amino-5-oxopentanoate = 5-aminolevulinate. It participates in porphyrin-containing compound metabolism; protoporphyrin-IX biosynthesis; 5-aminolevulinate from L-glutamyl-tRNA(Glu): step 2/2. This chain is Glutamate-1-semialdehyde 2,1-aminomutase, found in Desulforamulus reducens (strain ATCC BAA-1160 / DSM 100696 / MI-1) (Desulfotomaculum reducens).